Here is a 463-residue protein sequence, read N- to C-terminus: L-seryl-tRNA(Sec) selenium transferase (463 aa).

K294 is modified (N6-(pyridoxal phosphate)lysine).

The protein belongs to the SelA family. Pyridoxal 5'-phosphate is required as a cofactor.

The protein resides in the cytoplasm. It carries out the reaction L-seryl-tRNA(Sec) + selenophosphate + H(+) = L-selenocysteinyl-tRNA(Sec) + phosphate. It participates in aminoacyl-tRNA biosynthesis; selenocysteinyl-tRNA(Sec) biosynthesis; selenocysteinyl-tRNA(Sec) from L-seryl-tRNA(Sec) (bacterial route): step 1/1. Converts seryl-tRNA(Sec) to selenocysteinyl-tRNA(Sec) required for selenoprotein biosynthesis. The sequence is that of L-seryl-tRNA(Sec) selenium transferase from Hyphomonas neptunium (strain ATCC 15444).